We begin with the raw amino-acid sequence, 352 residues long: Rhodopsin (352 aa).

The Extracellular segment spans residues 1-36; the sequence is MNGTEGPDFYIPFSNKTGVVRSPFEYPQYYLAEPWK. N-linked (GlcNAc...) asparagine glycosylation is found at asparagine 2 and asparagine 15. A helical membrane pass occupies residues 37 to 61; the sequence is YSALAAYMFMLIILGFPINFLTLYV. Over 62-73 the chain is Cytoplasmic; the sequence is TVQHKKLRSPLN. A helical transmembrane segment spans residues 74 to 96; the sequence is YILLNLAVADLFMVLGGFTTTLY. At 97–110 the chain is on the extracellular side; it reads TSMNGYFVFGVTGC. A disulfide bond links cysteine 110 and cysteine 187. A helical membrane pass occupies residues 111–133; the sequence is YFEGFFATLGGEVALWCLVVLAI. The 'Ionic lock' involved in activated form stabilization signature appears at 134–136; the sequence is ERY. At 134–152 the chain is on the cytoplasmic side; it reads ERYIVVCKPMSNFRFGENH. The helical transmembrane segment at 153–173 threads the bilayer; sequence AIMGVVFTWIMALTCAAPPLV. Over 174 to 202 the chain is Extracellular; sequence GWSRYIPEGMQCSCGVDYYTLKPEVNNES. A helical transmembrane segment spans residues 203–224; the sequence is FVIYMFVVHFAIPLAVIFFCYG. At 225–252 the chain is on the cytoplasmic side; sequence RLVCTVKEAAAQQQESATTQKAEKEVTR. The chain crosses the membrane as a helical span at residues 253-274; that stretch reads MVIIMVVSFLICWVPYASVAFY. Residues 275-286 lie on the Extracellular side of the membrane; that stretch reads IFSNQGSDFGPV. A helical transmembrane segment spans residues 287–308; the sequence is FMTIPAFFAKSSAIYNPVIYIV. Position 296 is an N6-(retinylidene)lysine (lysine 296). Topologically, residues 309-352 are cytoplasmic; that stretch reads MNKQFRNCMITTLCCGKNPLGDDETATGSKTETSSVSTSQVSPA. Residues cysteine 322 and cysteine 323 are each lipidated (S-palmitoyl cysteine). Positions 332-352 are disordered; sequence ETATGSKTETSSVSTSQVSPA. The segment covering 335-352 has biased composition (low complexity); the sequence is TGSKTETSSVSTSQVSPA.

It belongs to the G-protein coupled receptor 1 family. Opsin subfamily. Contains one covalently linked retinal chromophore. Upon light absorption, the covalently bound 11-cis-retinal is converted to all-trans-retinal. After hydrolysis of the Schiff base and release of the covalently bound all-trans-retinal, active rhodopsin is regenerated by binding of a fresh molecule of 11-cis-retinal. As to expression, expressed in rod-shaped photoreceptor cells in the retina that mediate vision in dim ligh (at protein level).

It is found in the membrane. The protein resides in the cell projection. It localises to the cilium. The protein localises to the photoreceptor outer segment. Its function is as follows. Photoreceptor required for image-forming vision at low light intensity. Required for photoreceptor cell viability after birth. Light-induced isomerization of 11-cis to all-trans retinal triggers a conformational change that activates signaling via G-proteins. Subsequent receptor phosphorylation mediates displacement of the bound G-protein alpha subunit by arrestin and terminates signaling. This Alligator mississippiensis (American alligator) protein is Rhodopsin (RHO).